Reading from the N-terminus, the 244-residue chain is Orotidine 5'-phosphate decarboxylase (244 aa).

Residues aspartate 10, lysine 32, 59–68 (DLKLHDIPNT), threonine 122, arginine 184, glutamine 193, glycine 213, and arginine 214 each bind substrate. Lysine 61 (proton donor) is an active-site residue.

Belongs to the OMP decarboxylase family. Type 1 subfamily. In terms of assembly, homodimer.

It carries out the reaction orotidine 5'-phosphate + H(+) = UMP + CO2. It participates in pyrimidine metabolism; UMP biosynthesis via de novo pathway; UMP from orotate: step 2/2. In terms of biological role, catalyzes the decarboxylation of orotidine 5'-monophosphate (OMP) to uridine 5'-monophosphate (UMP). The chain is Orotidine 5'-phosphate decarboxylase from Bacillus caldolyticus.